The primary structure comprises 547 residues: Nitrate transporter 2.1 (547 aa).

The next 12 membrane-spanning stretches (helical) occupy residues 53-73 (WICF…APII), 86-106 (NAGV…GIVV), 113-133 (YGAA…ALVT), 143-163 (FFIG…GTMF), 173-193 (AIAA…MPLI), 211-231 (AFFV…LLGI), 262-280 (LGNY…SFGV), 296-316 (FGLN…MNLF), 338-358 (IWAL…LGKV), 366-386 (IVIM…HFGI), 400-420 (GLVG…WFAG), and 433-453 (GFVY…FIWF).

It belongs to the major facilitator superfamily. Nitrate/nitrite porter (TC 2.A.1.8) family.

Its subcellular location is the cell membrane. Nitrite transport mediated by system 1 is very sensitive to inhibition by nitrate. Its function is as follows. Involved in nitrate transport, but does not seem to be able to mediate transport by its own. Acts as a dual component transporter with NAR2 (system 1). Imports nitrate with high affinity when expressed with NAR2 in a heterologous system (Xenopus oocytes). Involved in a high affinity and a high capacity transport specific for both nitrate and nitrite. This chain is Nitrate transporter 2.1, found in Chlamydomonas reinhardtii (Chlamydomonas smithii).